A 145-amino-acid chain; its full sequence is Class I hydrophobin 1 (145 aa).

An N-terminal signal peptide occupies residues 1 to 18 (MYASVIIYTLVALCGVMS). Disulfide bonds link C88-C118, C95-C112, C96-C106, and C119-C128. Residue N108 is glycosylated (N-linked (GlcNAc...) asparagine).

The protein belongs to the fungal hydrophobin family. Self-assembles to form functional amyloid fibrils called rodlets. Self-assembly into fibrillar rodlets occurs spontaneously at hydrophobic:hydrophilic interfaces and the rodlets further associate laterally to form amphipathic monolayers.

The protein resides in the secreted. It is found in the cell wall. Functionally, aerial growth, conidiation, and dispersal of filamentous fungi in the environment rely upon a capability of their secreting small amphipathic proteins called hydrophobins (HPBs) with low sequence identity. Class I can self-assemble into an outermost layer of rodlet bundles on aerial cell surfaces, conferring cellular hydrophobicity that supports fungal growth, development and dispersal; whereas Class II form highly ordered films at water-air interfaces through intermolecular interactions but contribute nothing to the rodlet structure. Hyd1 is a class I hydrophobin that is involved in plant root attachment and colonization, and that might also protect the growing hyphae from locally synthesized plant defense compounds during the first stages of cucumber interaction, allowing this opportunistic, non-pathogenic fungus to colonize the intercellular spaces of the plant root. The chain is Class I hydrophobin 1 from Trichoderma asperellum (Filamentous fungus).